Reading from the N-terminus, the 237-residue chain is KH homology domain-containing protein 1 (237 aa).

2 helical membrane-spanning segments follow: residues 7-29 (RLFRVLFVIETVSEYGVLIFIYG) and 33-50 (LQTLAMLLIGTVSFHLWI). The KH; atypical domain maps to 96-155 (PMVFHMEEDQEELIFGHGDTYLRCIEVHSHTLIQLESWFTATGQTRVTVVGPHRARQWLL).

This sequence belongs to the KHDC1 family.

The protein resides in the membrane. This Homo sapiens (Human) protein is KH homology domain-containing protein 1.